A 169-amino-acid polypeptide reads, in one-letter code: MANVNIQAGAGEGLQEKLVAVRRVSKVVKGGRQFGFTALTVVGDGNGRVGFGLSKAREVPVAIQKSMEQARKNMRKVALNGQTLHHPVTAAAGAAKVHMQPASEGTGIIAGGAMRAVFEVVGVHNVLAKCIGTNNPINVVRATIKGLTALRDPKSVAAKRGMTVEELLG.

One can recognise an S5 DRBM domain in the interval 14–77 (LQEKLVAVRR…EQARKNMRKV (64 aa)).

The protein belongs to the universal ribosomal protein uS5 family. As to quaternary structure, part of the 30S ribosomal subunit. Contacts proteins S4 and S8.

Its function is as follows. With S4 and S12 plays an important role in translational accuracy. Located at the back of the 30S subunit body where it stabilizes the conformation of the head with respect to the body. This Methylococcus capsulatus (strain ATCC 33009 / NCIMB 11132 / Bath) protein is Small ribosomal subunit protein uS5.